The chain runs to 192 residues: MDTSRLTLDHFLSRFQLLRPQMTHKTLNQRQAAVLIPVVRRPQPGLLLTQRAIHLRKHAGQVAFPGGAVDSTDASLIAAALREAQEEVAIPPQAVEVIGVLPPVDSVTGFQVTPVVGIIPPNLPWRASEDEVSAVFEMPLAQALQLGRYHPLDVYRRGNSHRVWLSWYEHYFVWGMTANILRELALQIGVKP.

The Nudix hydrolase domain maps to 29–160 (QRQAAVLIPV…PLDVYRRGNS (132 aa)). The Nudix box signature appears at 67-89 (GAVDSTDASLIAAALREAQEEVA). Residues Glu-83 and Glu-87 each contribute to the Mg(2+) site.

This sequence belongs to the Nudix hydrolase family. PCD1 subfamily. The cofactor is Mn(2+). It depends on Mg(2+) as a cofactor.

Functionally, probably mediates the hydrolysis of some nucleoside diphosphate derivatives. This is an uncharacterized protein from Salmonella dublin (strain CT_02021853).